A 154-amino-acid chain; its full sequence is Prefoldin subunit alpha (154 aa).

A compositionally biased stretch (polar residues) spans 92-102 (DNAVESLSTKQ). Residues 92 to 154 (DNAVESLSTK…MQDQQPEDNE (63 aa)) are disordered. The segment covering 103-114 (DALDNRIESLRD) has biased composition (basic and acidic residues). The span at 128–148 (QQAQQMQQQMQQQQMQQMQDQ) shows a compositional bias: low complexity.

It belongs to the prefoldin subunit alpha family. In terms of assembly, heterohexamer of two alpha and four beta subunits.

The protein resides in the cytoplasm. In terms of biological role, molecular chaperone capable of stabilizing a range of proteins. Seems to fulfill an ATP-independent, HSP70-like function in archaeal de novo protein folding. In Haloquadratum walsbyi (strain DSM 16790 / HBSQ001), this protein is Prefoldin subunit alpha.